A 163-amino-acid polypeptide reads, in one-letter code: SsrA-binding protein (163 aa).

Residues 135–156 (GKKEHDKRDDTKEREWKIEKSR) show a composition bias toward basic and acidic residues. The disordered stretch occupies residues 135 to 163 (GKKEHDKRDDTKEREWKIEKSRTMKHAAR).

It belongs to the SmpB family.

The protein resides in the cytoplasm. Required for rescue of stalled ribosomes mediated by trans-translation. Binds to transfer-messenger RNA (tmRNA), required for stable association of tmRNA with ribosomes. tmRNA and SmpB together mimic tRNA shape, replacing the anticodon stem-loop with SmpB. tmRNA is encoded by the ssrA gene; the 2 termini fold to resemble tRNA(Ala) and it encodes a 'tag peptide', a short internal open reading frame. During trans-translation Ala-aminoacylated tmRNA acts like a tRNA, entering the A-site of stalled ribosomes, displacing the stalled mRNA. The ribosome then switches to translate the ORF on the tmRNA; the nascent peptide is terminated with the 'tag peptide' encoded by the tmRNA and targeted for degradation. The ribosome is freed to recommence translation, which seems to be the essential function of trans-translation. The chain is SsrA-binding protein from Shewanella loihica (strain ATCC BAA-1088 / PV-4).